A 79-amino-acid polypeptide reads, in one-letter code: MLKLRLKRSGRKKQPSYRLVVMENTTRRDGRPVEQVGYYNTITKESYFDVIKIKKWLNYGAKPTQTVLNLLKKAKIIDQ.

The protein belongs to the bacterial ribosomal protein bS16 family.

The protein resides in the plastid. It localises to the chloroplast. The protein is Small ribosomal subunit protein bS16c of Trieres chinensis (Marine centric diatom).